The following is a 131-amino-acid chain: Fluoride-specific ion channel FluC 1 (131 aa).

4 helical membrane-spanning segments follow: residues 4 to 24, 40 to 60, 73 to 93, and 108 to 128; these read LALPAWQASLVAIGAVPGAWL, HWGTFAVNMVAAFALGLVLAL, LILLIGVGFFGSLSTFSTFAV, and LVLAVGSILGGLLAVAAGVGL. 2 residues coordinate Na(+): Gly-83 and Ser-86.

Belongs to the fluoride channel Fluc/FEX (TC 1.A.43) family.

The protein localises to the cell inner membrane. It catalyses the reaction fluoride(in) = fluoride(out). Its activity is regulated as follows. Na(+) is not transported, but it plays an essential structural role and its presence is essential for fluoride channel function. Its function is as follows. Fluoride-specific ion channel. Important for reducing fluoride concentration in the cell, thus reducing its toxicity. This is Fluoride-specific ion channel FluC 1 from Prochlorococcus marinus (strain MIT 9313).